The sequence spans 261 residues: Ethanolamine ammonia-lyase small subunit (261 aa).

Valine 158, glutamate 179, and cysteine 208 together coordinate adenosylcob(III)alamin.

The protein belongs to the EutC family. The basic unit is a heterodimer which dimerizes to form tetramers. The heterotetramers trimerize; 6 large subunits form a core ring with 6 small subunits projecting outwards. Adenosylcob(III)alamin is required as a cofactor.

The protein localises to the bacterial microcompartment. The catalysed reaction is ethanolamine = acetaldehyde + NH4(+). It participates in amine and polyamine degradation; ethanolamine degradation. Its function is as follows. Catalyzes the deamination of various vicinal amino-alcohols to oxo compounds. Allows this organism to utilize ethanolamine as the sole source of nitrogen and carbon in the presence of external vitamin B12. The polypeptide is Ethanolamine ammonia-lyase small subunit (Bradyrhizobium diazoefficiens (strain JCM 10833 / BCRC 13528 / IAM 13628 / NBRC 14792 / USDA 110)).